The following is a 219-amino-acid chain: tRNA (guanine-N(7)-)-methyltransferase (219 aa).

Residues glutamate 44, aspartate 69, glutamate 102, and asparagine 125 each coordinate S-adenosyl-L-methionine. Substrate-binding residues include lysine 129 and aspartate 161.

Belongs to the class I-like SAM-binding methyltransferase superfamily. TrmB family.

The catalysed reaction is guanosine(46) in tRNA + S-adenosyl-L-methionine = N(7)-methylguanosine(46) in tRNA + S-adenosyl-L-homocysteine. The protein operates within tRNA modification; N(7)-methylguanine-tRNA biosynthesis. Functionally, catalyzes the formation of N(7)-methylguanine at position 46 (m7G46) in tRNA. The protein is tRNA (guanine-N(7)-)-methyltransferase of Clostridium perfringens (strain 13 / Type A).